Here is a 484-residue protein sequence, read N- to C-terminus: tRNA sulfurtransferase (484 aa).

The 105-residue stretch at 63–167 (QAFGERLACI…GDKLYMVTKR (105 aa)) folds into the THUMP domain. Residues 185 to 186 (LI), Lys-267, Gly-289, and Gln-298 contribute to the ATP site. The cysteines at positions 346 and 458 are disulfide-linked. One can recognise a Rhodanese domain in the interval 406 to 484 (IDTNEVVIDI…GYHNVKVYRP (79 aa)). The Cysteine persulfide intermediate role is filled by Cys-458.

This sequence belongs to the ThiI family.

Its subcellular location is the cytoplasm. It catalyses the reaction [ThiI sulfur-carrier protein]-S-sulfanyl-L-cysteine + a uridine in tRNA + 2 reduced [2Fe-2S]-[ferredoxin] + ATP + H(+) = [ThiI sulfur-carrier protein]-L-cysteine + a 4-thiouridine in tRNA + 2 oxidized [2Fe-2S]-[ferredoxin] + AMP + diphosphate. The enzyme catalyses [ThiS sulfur-carrier protein]-C-terminal Gly-Gly-AMP + S-sulfanyl-L-cysteinyl-[cysteine desulfurase] + AH2 = [ThiS sulfur-carrier protein]-C-terminal-Gly-aminoethanethioate + L-cysteinyl-[cysteine desulfurase] + A + AMP + 2 H(+). Its pathway is cofactor biosynthesis; thiamine diphosphate biosynthesis. Catalyzes the ATP-dependent transfer of a sulfur to tRNA to produce 4-thiouridine in position 8 of tRNAs, which functions as a near-UV photosensor. Also catalyzes the transfer of sulfur to the sulfur carrier protein ThiS, forming ThiS-thiocarboxylate. This is a step in the synthesis of thiazole, in the thiamine biosynthesis pathway. The sulfur is donated as persulfide by IscS. This is tRNA sulfurtransferase from Shewanella oneidensis (strain ATCC 700550 / JCM 31522 / CIP 106686 / LMG 19005 / NCIMB 14063 / MR-1).